The sequence spans 867 residues: Transcription factor E2F8 (867 aa).

The segment at 38 to 58 is disordered; that stretch reads DFGPLTTPTKPKEGSQGEPWT. Residues S71 and S102 each carry the phosphoserine modification. 2 consecutive DNA-binding regions follow at residues 113 to 182 and 261 to 347; these read RKEK…TWHG and RKDK…KWTG. 3 disordered regions span residues 408 to 432, 532 to 616, and 771 to 800; these read RRKI…NSAP, QSVT…SGSK, and APEN…GQSV. 2 positions are modified to phosphoserine: S413 and S417. Composition is skewed to polar residues over residues 413–432 and 532–556; these read SAPS…NSAP and QSVT…TGSK. Residues 557–567 are compositionally biased toward basic and acidic residues; that stretch reads DSTDATTEKAA. Residues 568–579 show a composition bias toward polar residues; the sequence is NDTSKASASTRP. Residues 594–604 are compositionally biased toward basic and acidic residues; sequence RTREPAGERGS. Positions 775-800 are enriched in polar residues; that stretch reads AGTQQGRATNYDSPVPGQSQPNGQSV.

This sequence belongs to the E2F/DP family. In terms of assembly, homodimer and heterodimer: mainly forms homodimers and, to a lesser extent, heterodimers with E2F8. Dimerization is important for DNA-binding. Interacts with HIF1A.

The protein localises to the nucleus. In terms of biological role, atypical E2F transcription factor that participates in various processes such as angiogenesis and polyploidization of specialized cells. Mainly acts as a transcription repressor that binds DNA independently of DP proteins and specifically recognizes the E2 recognition site 5'-TTTC[CG]CGC-3'. Directly represses transcription of classical E2F transcription factors such as E2F1: component of a feedback loop in S phase by repressing the expression of E2F1, thereby preventing p53/TP53-dependent apoptosis. Plays a key role in polyploidization of cells in placenta and liver by regulating the endocycle, probably by repressing genes promoting cytokinesis and antagonizing action of classical E2F proteins (E2F1, E2F2 and/or E2F3). Required for placental development by promoting polyploidization of trophoblast giant cells. Acts as a promoter of sprouting angiogenesis, possibly by acting as a transcription activator: associates with HIF1A, recognizes and binds the VEGFA promoter, which is different from canonical E2 recognition site, and activates expression of the VEGFA gene. This chain is Transcription factor E2F8 (E2F8), found in Homo sapiens (Human).